Here is a 448-residue protein sequence, read N- to C-terminus: Tubulin alpha-2 chain (448 aa).

Positions 11, 69, 138, 142, 143, 177, 204, and 226 each coordinate GTP. Position 69 (glutamate 69) interacts with Mg(2+). The active site involves glutamate 252. The tract at residues 428–448 (KDYEEVGADSNEGGEEEGEEY) is disordered. The span at 429 to 448 (DYEEVGADSNEGGEEEGEEY) shows a compositional bias: acidic residues.

This sequence belongs to the tubulin family. Dimer of alpha and beta chains. A typical microtubule is a hollow water-filled tube with an outer diameter of 25 nm and an inner diameter of 15 nM. Alpha-beta heterodimers associate head-to-tail to form protofilaments running lengthwise along the microtubule wall with the beta-tubulin subunit facing the microtubule plus end conferring a structural polarity. Microtubules usually have 13 protofilaments but different protofilament numbers can be found in some organisms and specialized cells. Requires Mg(2+) as cofactor. Post-translationally, undergoes a tyrosination/detyrosination cycle, the cyclic removal and re-addition of a C-terminal tyrosine residue. Expressed in intestine, pharyngeal muscle cells, and a subset of neurons.

It is found in the cytoplasm. Its subcellular location is the cytoskeleton. It carries out the reaction GTP + H2O = GDP + phosphate + H(+). Its function is as follows. Tubulin is the major constituent of microtubules, a cylinder consisting of laterally associated linear protofilaments composed of alpha- and beta-tubulin heterodimers. Microtubules grow by the addition of GTP-tubulin dimers to the microtubule end, where a stabilizing cap forms. Below the cap, tubulin dimers are in GDP-bound state, owing to GTPase activity of alpha-tubulin. Required for the normal dynamic behavior of the non-centrosomal microtubules in the epidermal syncytium. Involved in the redistribution of microtubule end-binding protein EB1/ebp-2 caused by wounding. Required to modulate expression in the epidermis of antimicrobial peptides, such as nlp-29, after wounding, or fungal infection. In Caenorhabditis elegans, this protein is Tubulin alpha-2 chain (tba-2).